A 280-amino-acid polypeptide reads, in one-letter code: Shikimate dehydrogenase (NADP(+)) (280 aa).

Shikimate-binding positions include serine 15–serine 17 and threonine 62. Lysine 66 (proton acceptor) is an active-site residue. An NADP(+)-binding site is contributed by glutamate 78. Asparagine 87 and aspartate 102 together coordinate shikimate. Residues glycine 127–alanine 131, asparagine 151–lysine 156, and isoleucine 219 each bind NADP(+). Tyrosine 221 contacts shikimate. Residue glycine 242 participates in NADP(+) binding.

Belongs to the shikimate dehydrogenase family. Homodimer.

The enzyme catalyses shikimate + NADP(+) = 3-dehydroshikimate + NADPH + H(+). It functions in the pathway metabolic intermediate biosynthesis; chorismate biosynthesis; chorismate from D-erythrose 4-phosphate and phosphoenolpyruvate: step 4/7. Involved in the biosynthesis of the chorismate, which leads to the biosynthesis of aromatic amino acids. Catalyzes the reversible NADPH linked reduction of 3-dehydroshikimate (DHSA) to yield shikimate (SA). The chain is Shikimate dehydrogenase (NADP(+)) from Bacillus subtilis (strain 168).